Here is a 186-residue protein sequence, read N- to C-terminus: Ribosome-recycling factor (186 aa).

The protein belongs to the RRF family.

Its subcellular location is the cytoplasm. Responsible for the release of ribosomes from messenger RNA at the termination of protein biosynthesis. May increase the efficiency of translation by recycling ribosomes from one round of translation to another. This Acidovorax ebreus (strain TPSY) (Diaphorobacter sp. (strain TPSY)) protein is Ribosome-recycling factor.